The primary structure comprises 350 residues: Methionine import ATP-binding protein MetN (350 aa).

Residues 2-241 (IQIKNLKKEY…PQAPVTRSFV (240 aa)) enclose the ABC transporter domain. 38–45 (GHSGAGKS) contacts ATP.

This sequence belongs to the ABC transporter superfamily. Methionine importer (TC 3.A.1.24) family. The complex is composed of two ATP-binding proteins (MetN), two transmembrane proteins (MetI) and a solute-binding protein (MetQ).

It is found in the cell inner membrane. It catalyses the reaction L-methionine(out) + ATP + H2O = L-methionine(in) + ADP + phosphate + H(+). It carries out the reaction D-methionine(out) + ATP + H2O = D-methionine(in) + ADP + phosphate + H(+). Part of the ABC transporter complex MetNIQ involved in methionine import. Responsible for energy coupling to the transport system. This Francisella tularensis subsp. tularensis (strain FSC 198) protein is Methionine import ATP-binding protein MetN.